We begin with the raw amino-acid sequence, 89 residues long: Elongation factor 1-beta (89 aa).

The protein belongs to the EF-1-beta/EF-1-delta family.

Functionally, promotes the exchange of GDP for GTP in EF-1-alpha/GDP, thus allowing the regeneration of EF-1-alpha/GTP that could then be used to form the ternary complex EF-1-alpha/GTP/AAtRNA. The polypeptide is Elongation factor 1-beta (Methanosarcina mazei (strain ATCC BAA-159 / DSM 3647 / Goe1 / Go1 / JCM 11833 / OCM 88) (Methanosarcina frisia)).